Consider the following 1064-residue polypeptide: Isoleucine--tRNA ligase, cytoplasmic (1064 aa).

The 'HIGH' region motif lies at 42 to 52; the sequence is PFATGRPHHGH. The short motif at 597 to 601 is the 'KMSKS' region element; that stretch reads KMSKR. Lys-600 lines the ATP pocket.

Belongs to the class-I aminoacyl-tRNA synthetase family.

The protein resides in the cytoplasm. The catalysed reaction is tRNA(Ile) + L-isoleucine + ATP = L-isoleucyl-tRNA(Ile) + AMP + diphosphate. This is Isoleucine--tRNA ligase, cytoplasmic (irs1) from Schizosaccharomyces pombe (strain 972 / ATCC 24843) (Fission yeast).